Consider the following 246-residue polypeptide: tRNA pseudouridine synthase A (246 aa).

Aspartate 52 serves as the catalytic Nucleophile. Substrate is bound at residue tyrosine 111.

The protein belongs to the tRNA pseudouridine synthase TruA family. Homodimer.

It catalyses the reaction uridine(38/39/40) in tRNA = pseudouridine(38/39/40) in tRNA. Functionally, formation of pseudouridine at positions 38, 39 and 40 in the anticodon stem and loop of transfer RNAs. The protein is tRNA pseudouridine synthase A of Rhodopseudomonas palustris (strain BisA53).